A 367-amino-acid chain; its full sequence is Homoserine O-acetyltransferase (367 aa).

One can recognise an AB hydrolase-1 domain in the interval 41-339 (NLIVLEHALT…PVGHDAFLTE (299 aa)). Ser136 (nucleophile) is an active-site residue. Arg205 is a binding site for substrate. Active-site residues include Asp303 and His333. Asp334 is a binding site for substrate.

Belongs to the AB hydrolase superfamily. MetX family. Homodimer.

Its subcellular location is the cytoplasm. It catalyses the reaction L-homoserine + acetyl-CoA = O-acetyl-L-homoserine + CoA. Its pathway is amino-acid biosynthesis; L-methionine biosynthesis via de novo pathway; O-acetyl-L-homoserine from L-homoserine: step 1/1. Its function is as follows. Transfers an acetyl group from acetyl-CoA to L-homoserine, forming acetyl-L-homoserine. This Corynebacterium diphtheriae (strain ATCC 700971 / NCTC 13129 / Biotype gravis) protein is Homoserine O-acetyltransferase.